We begin with the raw amino-acid sequence, 221 residues long: 7-cyano-7-deazaguanine synthase (221 aa).

An ATP-binding site is contributed by 7–17 (LSGGLDSAVSL). Zn(2+)-binding residues include C192, C200, C203, and C206.

This sequence belongs to the QueC family. Homodimer. Requires Zn(2+) as cofactor.

It catalyses the reaction 7-carboxy-7-deazaguanine + NH4(+) + ATP = 7-cyano-7-deazaguanine + ADP + phosphate + H2O + H(+). Its pathway is purine metabolism; 7-cyano-7-deazaguanine biosynthesis. Catalyzes the ATP-dependent conversion of 7-carboxy-7-deazaguanine (CDG) to 7-cyano-7-deazaguanine (preQ(0)). The polypeptide is 7-cyano-7-deazaguanine synthase (Pelotomaculum thermopropionicum (strain DSM 13744 / JCM 10971 / SI)).